The sequence spans 251 residues: Probable transcriptional regulatory protein Francci3_1368 (251 aa).

Belongs to the TACO1 family.

The protein resides in the cytoplasm. This chain is Probable transcriptional regulatory protein Francci3_1368, found in Frankia casuarinae (strain DSM 45818 / CECT 9043 / HFP020203 / CcI3).